A 593-amino-acid polypeptide reads, in one-letter code: Translation initiation factor IF-2 (593 aa).

The region spanning 101–270 (LRPPVVTIMG…LLIAELEDLR (170 aa)) is the tr-type G domain. Residues 110–117 (GHVDHGKT) form a G1 region. 110–117 (GHVDHGKT) contacts GTP. The tract at residues 135-139 (GITQH) is G2. The interval 156-159 (DTPG) is G3. Residues 156 to 160 (DTPGH) and 210 to 213 (NKMD) each bind GTP. The G4 stretch occupies residues 210–213 (NKMD). The G5 stretch occupies residues 246-248 (SAR).

It belongs to the TRAFAC class translation factor GTPase superfamily. Classic translation factor GTPase family. IF-2 subfamily.

Its subcellular location is the cytoplasm. Functionally, one of the essential components for the initiation of protein synthesis. Protects formylmethionyl-tRNA from spontaneous hydrolysis and promotes its binding to the 30S ribosomal subunits. Also involved in the hydrolysis of GTP during the formation of the 70S ribosomal complex. This Dehalococcoides mccartyi (strain CBDB1) protein is Translation initiation factor IF-2.